A 417-amino-acid chain; its full sequence is Serine/threonine-protein kinase SBK1 (417 aa).

The 266-residue stretch at 53–318 folds into the Protein kinase domain; it reads YELVRELGKG…VFRFLKHELT (266 aa). Residues 59 to 67 and Lys82 each bind ATP; that span reads LGKGTYGKV. Asp174 serves as the catalytic Proton acceptor. The segment at 321–405 is disordered; that stretch reads LRRRPSHRAR…TDGRTDKSKG (85 aa). Residues 363-382 show a composition bias toward pro residues; that stretch reads PSPPSVGPVVPVPVPVPVPV.

Belongs to the protein kinase superfamily. Ser/Thr protein kinase family.

The protein localises to the cytoplasm. It catalyses the reaction L-seryl-[protein] + ATP = O-phospho-L-seryl-[protein] + ADP + H(+). The catalysed reaction is L-threonyl-[protein] + ATP = O-phospho-L-threonyl-[protein] + ADP + H(+). In terms of biological role, may be involved in signal-transduction pathways related to the control of brain development. The polypeptide is Serine/threonine-protein kinase SBK1 (Sbk1) (Mus musculus (Mouse)).